Consider the following 957-residue polypeptide: Glycine dehydrogenase (decarboxylating) (957 aa).

Position 704 is an N6-(pyridoxal phosphate)lysine (Lys-704).

Belongs to the GcvP family. In terms of assembly, the glycine cleavage system is composed of four proteins: P, T, L and H. It depends on pyridoxal 5'-phosphate as a cofactor.

The catalysed reaction is N(6)-[(R)-lipoyl]-L-lysyl-[glycine-cleavage complex H protein] + glycine + H(+) = N(6)-[(R)-S(8)-aminomethyldihydrolipoyl]-L-lysyl-[glycine-cleavage complex H protein] + CO2. The glycine cleavage system catalyzes the degradation of glycine. The P protein binds the alpha-amino group of glycine through its pyridoxal phosphate cofactor; CO(2) is released and the remaining methylamine moiety is then transferred to the lipoamide cofactor of the H protein. The sequence is that of Glycine dehydrogenase (decarboxylating) from Bordetella petrii (strain ATCC BAA-461 / DSM 12804 / CCUG 43448).